Consider the following 327-residue polypeptide: Biotin synthase (327 aa).

A Radical SAM core domain is found at 49–282; that stretch reads FNKEKIDLCS…KKVIRLCGGR (234 aa). The [4Fe-4S] cluster site is built by C67, C71, and C74. 4 residues coordinate [2Fe-2S] cluster: S110, C142, C201, and R277.

It belongs to the radical SAM superfamily. Biotin synthase family. Homodimer. [4Fe-4S] cluster is required as a cofactor. The cofactor is [2Fe-2S] cluster.

It catalyses the reaction (4R,5S)-dethiobiotin + (sulfur carrier)-SH + 2 reduced [2Fe-2S]-[ferredoxin] + 2 S-adenosyl-L-methionine = (sulfur carrier)-H + biotin + 2 5'-deoxyadenosine + 2 L-methionine + 2 oxidized [2Fe-2S]-[ferredoxin]. It participates in cofactor biosynthesis; biotin biosynthesis; biotin from 7,8-diaminononanoate: step 2/2. Catalyzes the conversion of dethiobiotin (DTB) to biotin by the insertion of a sulfur atom into dethiobiotin via a radical-based mechanism. The sequence is that of Biotin synthase from Methanococcus maripaludis (strain C7 / ATCC BAA-1331).